We begin with the raw amino-acid sequence, 268 residues long: Virulence plasmid ParA family protein pGP5-D (268 aa).

F13–T20 contacts ATP.

This sequence belongs to the ParA family.

This chain is Virulence plasmid ParA family protein pGP5-D, found in Chlamydia muridarum (strain MoPn / Nigg).